The primary structure comprises 299 residues: Oxygen-dependent coproporphyrinogen-III oxidase (299 aa).

Residue Ser92 coordinates substrate. 2 residues coordinate a divalent metal cation: His96 and His106. Catalysis depends on His106, which acts as the Proton donor. 108-110 (NVR) is a binding site for substrate. A divalent metal cation is bound by residues His145 and His175. The tract at residues 240 to 275 (YVEFNLVWDRGTLFGLQTGGRTESILMSMPPLVRWE) is important for dimerization. 258–260 (GGR) contributes to the substrate binding site.

The protein belongs to the aerobic coproporphyrinogen-III oxidase family. Homodimer. Requires a divalent metal cation as cofactor.

It localises to the cytoplasm. The catalysed reaction is coproporphyrinogen III + O2 + 2 H(+) = protoporphyrinogen IX + 2 CO2 + 2 H2O. It participates in porphyrin-containing compound metabolism; protoporphyrin-IX biosynthesis; protoporphyrinogen-IX from coproporphyrinogen-III (O2 route): step 1/1. Involved in the heme biosynthesis. Catalyzes the aerobic oxidative decarboxylation of propionate groups of rings A and B of coproporphyrinogen-III to yield the vinyl groups in protoporphyrinogen-IX. The protein is Oxygen-dependent coproporphyrinogen-III oxidase of Salmonella heidelberg (strain SL476).